A 301-amino-acid polypeptide reads, in one-letter code: Probable alpha-L-glutamate ligase (301 aa).

Residues 104–287 enclose the ATP-grasp domain; the sequence is LQLLSRKGVG…IAGMIIEYIE (184 aa). ATP-binding positions include Lys141, 178–179, Asp187, and 211–213; these read EY and RSN. Positions 248, 260, and 262 each coordinate Mg(2+). The Mn(2+) site is built by Asp248, Glu260, and Asn262.

It belongs to the RimK family. Requires Mg(2+) as cofactor. Mn(2+) serves as cofactor.

In Photobacterium profundum (strain SS9), this protein is Probable alpha-L-glutamate ligase.